The primary structure comprises 354 residues: DNA integrity scanning protein DisA (354 aa).

The 139-residue stretch at 6-144 (DDELKKILKI…GDIKYVLRDS (139 aa)) folds into the DAC domain. Residues Gly73, Leu91, and 104 to 108 (TRHRT) contribute to the ATP site.

Belongs to the DisA family. As to quaternary structure, homooctamer. The cofactor is Mg(2+).

The catalysed reaction is 2 ATP = 3',3'-c-di-AMP + 2 diphosphate. Its function is as follows. Participates in a DNA-damage check-point that is active prior to asymmetric division when DNA is damaged. DisA forms globular foci that rapidly scan along the chromosomes during sporulation, searching for lesions. When a lesion is present, DisA pauses at the lesion site. This triggers a cellular response that culminates in a temporary block in sporulation initiation. Also has diadenylate cyclase activity, catalyzing the condensation of 2 ATP molecules into cyclic di-AMP (c-di-AMP). c-di-AMP acts as a signaling molecule that couples DNA integrity with progression of sporulation. The rise in c-di-AMP level generated by DisA while scanning the chromosome, operates as a positive signal that advances sporulation; upon encountering a lesion, the DisA focus arrests at the damaged site and halts c-di-AMP synthesis. The sequence is that of DNA integrity scanning protein DisA from Clostridium perfringens (strain SM101 / Type A).